Here is a 288-residue protein sequence, read N- to C-terminus: Bifunctional protein FolD (288 aa).

Residues 166–168 (GAS) and Ile232 contribute to the NADP(+) site.

It belongs to the tetrahydrofolate dehydrogenase/cyclohydrolase family. In terms of assembly, homodimer.

The catalysed reaction is (6R)-5,10-methylene-5,6,7,8-tetrahydrofolate + NADP(+) = (6R)-5,10-methenyltetrahydrofolate + NADPH. It catalyses the reaction (6R)-5,10-methenyltetrahydrofolate + H2O = (6R)-10-formyltetrahydrofolate + H(+). It participates in one-carbon metabolism; tetrahydrofolate interconversion. Functionally, catalyzes the oxidation of 5,10-methylenetetrahydrofolate to 5,10-methenyltetrahydrofolate and then the hydrolysis of 5,10-methenyltetrahydrofolate to 10-formyltetrahydrofolate. This is Bifunctional protein FolD from Klebsiella pneumoniae (strain 342).